The following is a 333-amino-acid chain: Flap endonuclease 1 (333 aa).

An N-domain region spans residues 1–99 (MGVALRDILA…ETNAERKKLR (99 aa)). The Mg(2+) site is built by aspartate 28, aspartate 81, glutamate 153, glutamate 155, aspartate 174, aspartate 176, and aspartate 235. Residues 117–256 (EAYRQARSAT…TALKIVKSGG (140 aa)) are I-domain. The segment at 325-333 (GQKTLESFF) is interaction with PCNA.

The protein belongs to the XPG/RAD2 endonuclease family. FEN1 subfamily. As to quaternary structure, interacts with PCNA. PCNA stimulates the nuclease activity without altering cleavage specificity. Mg(2+) is required as a cofactor.

Its function is as follows. Structure-specific nuclease with 5'-flap endonuclease and 5'-3' exonuclease activities involved in DNA replication and repair. During DNA replication, cleaves the 5'-overhanging flap structure that is generated by displacement synthesis when DNA polymerase encounters the 5'-end of a downstream Okazaki fragment. Binds the unpaired 3'-DNA end and kinks the DNA to facilitate 5' cleavage specificity. Cleaves one nucleotide into the double-stranded DNA from the junction in flap DNA, leaving a nick for ligation. Also involved in the base excision repair (BER) pathway. Acts as a genome stabilization factor that prevents flaps from equilibrating into structures that lead to duplications and deletions. Also possesses 5'-3' exonuclease activity on nicked or gapped double-stranded DNA. The protein is Flap endonuclease 1 of Methanoregula boonei (strain DSM 21154 / JCM 14090 / 6A8).